A 906-amino-acid chain; its full sequence is Protein translocase subunit SecA (906 aa).

ATP contacts are provided by residues Q86, 104 to 108, and D511; that span reads GEGKT. Positions 852–888 are enriched in basic and acidic residues; that stretch reads EHESVIDNNQRHDEDEQEEAPKVKQVRREGPKVKRND. A disordered region spans residues 852 to 906; it reads EHESVIDNNQRHDEDEQEEAPKVKQVRREGPKVKRNDPCPCGSGKKYKQCHSKVE. Zn(2+)-binding residues include C890, C892, C901, and H902. Residues 896 to 906 show a composition bias toward basic residues; sequence KKYKQCHSKVE.

It belongs to the SecA family. As to quaternary structure, monomer and homodimer. Part of the essential Sec protein translocation apparatus which comprises SecA, SecYEG and auxiliary proteins SecDF-YajC and YidC. It depends on Zn(2+) as a cofactor.

Its subcellular location is the cell inner membrane. The protein resides in the cytoplasm. It carries out the reaction ATP + H2O + cellular proteinSide 1 = ADP + phosphate + cellular proteinSide 2.. Functionally, part of the Sec protein translocase complex. Interacts with the SecYEG preprotein conducting channel. Has a central role in coupling the hydrolysis of ATP to the transfer of proteins into and across the cell membrane, serving both as a receptor for the preprotein-SecB complex and as an ATP-driven molecular motor driving the stepwise translocation of polypeptide chains across the membrane. This Francisella tularensis subsp. tularensis (strain SCHU S4 / Schu 4) protein is Protein translocase subunit SecA.